A 100-amino-acid polypeptide reads, in one-letter code: UPF0213 protein YhbQ (100 aa).

One can recognise a GIY-YIG domain in the interval 2 to 77 (TPWYLYLIRT…KQLTKRQKER (76 aa)).

This sequence belongs to the UPF0213 family.

The protein is UPF0213 protein YhbQ of Escherichia coli O8 (strain IAI1).